A 221-amino-acid chain; its full sequence is Response regulator protein PmrA (221 aa).

In terms of domain architecture, Response regulatory spans 2-116; that stretch reads RILLAEDDLL…ELQARVRALT (115 aa). Aspartate 51 is modified (4-aspartylphosphate). Residues 124–218 constitute a DNA-binding region (ompR/PhoB-type); the sequence is LPQLVHGELR…VRGIGYGIDQ (95 aa).

It is found in the cytoplasm. Functionally, member of the two-component regulatory system PmrA/PmrB that plays a role in the regulation of resistance towards polymyxin B and cationic antimicrobial peptides in response to limiting concentrations of Mg(2+). Functions as a transcriptional activator by direct binding to a cis-acting sequence upstream of the target gene promoters including lipase lipA and pmrH promoters. Also autoregulates its own pmrAB operon under Mg(2+)-limiting conditions. The polypeptide is Response regulator protein PmrA (pmrA) (Pseudomonas aeruginosa (strain ATCC 15692 / DSM 22644 / CIP 104116 / JCM 14847 / LMG 12228 / 1C / PRS 101 / PAO1)).